Consider the following 391-residue polypeptide: Arsenite methyltransferase (391 aa).

The disordered stretch occupies residues 1–126; the sequence is MELWTHPTPA…TMVADRDPEE (126 aa). The span at 28 to 39 shows a compositional bias: polar residues; sequence CSQPWATTPGTN. Positions 40–65 are enriched in low complexity; sequence SSDASRTPTTASASATSKPQSASARA. Residues 102-116 show a composition bias toward polar residues; the sequence is KRSTTCEATMSNDNE.

It belongs to the methyltransferase superfamily. Arsenite methyltransferase family.

It carries out the reaction arsenic triglutathione + [thioredoxin]-dithiol + S-adenosyl-L-methionine + 2 H2O = methylarsonous acid + [thioredoxin]-disulfide + 3 glutathione + S-adenosyl-L-homocysteine + H(+). It catalyses the reaction arsenic triglutathione + 2 [thioredoxin]-dithiol + 2 S-adenosyl-L-methionine + H2O = dimethylarsinous acid + 2 [thioredoxin]-disulfide + 3 glutathione + 2 S-adenosyl-L-homocysteine + 2 H(+). The enzyme catalyses arsenic triglutathione + 3 [thioredoxin]-dithiol + 3 S-adenosyl-L-methionine = trimethylarsine + 3 [thioredoxin]-disulfide + 3 glutathione + 3 S-adenosyl-L-homocysteine + 3 H(+). Catalyzes the transfer of a methyl group from AdoMet to arsenite, producing methylated arsenicals. This Halobacterium salinarum (strain ATCC 700922 / JCM 11081 / NRC-1) (Halobacterium halobium) protein is Arsenite methyltransferase.